The chain runs to 454 residues: Signal recognition particle protein (454 aa).

Residues 102–109 (GLQGTGKT), 184–188 (DTAGR), and 242–245 (TKMD) each bind GTP.

It belongs to the GTP-binding SRP family. SRP54 subfamily. In terms of assembly, part of the signal recognition particle protein translocation system, which is composed of SRP and FtsY.

It localises to the cytoplasm. It carries out the reaction GTP + H2O = GDP + phosphate + H(+). Involved in targeting and insertion of nascent membrane proteins into the cytoplasmic membrane. Binds to the hydrophobic signal sequence of the ribosome-nascent chain (RNC) as it emerges from the ribosomes. The SRP-RNC complex is then targeted to the cytoplasmic membrane where it interacts with the SRP receptor FtsY. In Aquifex aeolicus (strain VF5), this protein is Signal recognition particle protein.